We begin with the raw amino-acid sequence, 421 residues long: MDLETKVKKMGLGHEQGFGAPCLKCKEKCEGFELHFWRKICRNCKCGQEEHDVLLSNEEDRKVGKLFEDTKYTTLIAKLKSDGIPMYKRNVMILTNPVAAKKNVSINTVTYEWAPPVQNQALARQYMQMLPKEKQPVAGSEGAQYRKKQLAKQLPAHDQDPSKCHELSPKEVKEMQQFVKKYKNEALGVGDVKLPCEMDARGPNPMYIPGGDRSTAAAVGAMENKTAERKKTQYSCYCCKMSMKEGDPAIYAERAGYDKLWHPACFVCSTCYELLVDMIYFWKDEKLYCGRHYCDSEKPRCAGCDELIFSNEYTQAENQNWHLKHFCCFDCDYILAGEIYVMVNDKPVCKPCYVKNHAVVCQGCHNAIDPEVQRVTYNNFSWHASTECFLCSCCSKCLIGQKFMPVEGMVFCSVECKKMMS.

The PET domain occupies 92-199; that stretch reads MILTNPVAAK…GDVKLPCEMD (108 aa). Residues 133–164 are disordered; it reads EKQPVAGSEGAQYRKKQLAKQLPAHDQDPSKC. Positions 155–164 are enriched in basic and acidic residues; sequence PAHDQDPSKC. LIM zinc-binding domains lie at 234 to 297, 299 to 359, and 362 to 421; these read YSCY…CDSE, PRCA…NHAV, and QGCH…KMMS.

Belongs to the prickle / espinas / testin family. Interacts via LIM domain 1 with ZYX. Interacts (via LIM domain 3) with ENAH and VASP. Interacts with ALKBH4, talin, actin, alpha-actinin, GRIP1 and PXN. Interacts (via LIM domain 2) with ACTL7A (via N-terminus). Heterodimer with ACTL7A; the heterodimer interacts with ENAH to form a heterotrimer.

It is found in the cytoplasm. It localises to the cell junction. Its subcellular location is the focal adhesion. Functionally, scaffold protein that may play a role in cell adhesion, cell spreading and in the reorganization of the actin cytoskeleton. Plays a role in the regulation of cell proliferation. May act as a tumor suppressor. The chain is Testin (TES) from Microcebus murinus (Gray mouse lemur).